A 572-amino-acid chain; its full sequence is Proline--tRNA ligase (572 aa).

This sequence belongs to the class-II aminoacyl-tRNA synthetase family. ProS type 1 subfamily. Homodimer.

The protein resides in the cytoplasm. The enzyme catalyses tRNA(Pro) + L-proline + ATP = L-prolyl-tRNA(Pro) + AMP + diphosphate. Functionally, catalyzes the attachment of proline to tRNA(Pro) in a two-step reaction: proline is first activated by ATP to form Pro-AMP and then transferred to the acceptor end of tRNA(Pro). As ProRS can inadvertently accommodate and process non-cognate amino acids such as alanine and cysteine, to avoid such errors it has two additional distinct editing activities against alanine. One activity is designated as 'pretransfer' editing and involves the tRNA(Pro)-independent hydrolysis of activated Ala-AMP. The other activity is designated 'posttransfer' editing and involves deacylation of mischarged Ala-tRNA(Pro). The misacylated Cys-tRNA(Pro) is not edited by ProRS. In Edwardsiella ictaluri (strain 93-146), this protein is Proline--tRNA ligase.